We begin with the raw amino-acid sequence, 95 residues long: Small ribosomal subunit protein bS6 (95 aa).

This sequence belongs to the bacterial ribosomal protein bS6 family.

Binds together with bS18 to 16S ribosomal RNA. The protein is Small ribosomal subunit protein bS6 of Corynebacterium urealyticum (strain ATCC 43042 / DSM 7109).